Reading from the N-terminus, the 404-residue chain is L-cysteine:1D-myo-inositol 2-amino-2-deoxy-alpha-D-glucopyranoside ligase 1 (404 aa).

Cys-47 serves as a coordination point for Zn(2+). L-cysteinyl-5'-AMP contacts are provided by residues 47 to 50 (CGIT), Thr-62, and 85 to 87 (NIT). The short motif at 49–59 (ITPYDSTHLGH) is the 'HIGH' region element. The short motif at 188 to 193 (ERGGDP) is the 'ERGGDP' region element. Trp-228 contacts L-cysteinyl-5'-AMP. Zn(2+) is bound at residue Cys-232. Residue 250 to 252 (GSD) coordinates L-cysteinyl-5'-AMP. Residue His-257 coordinates Zn(2+). Ile-284 contributes to the L-cysteinyl-5'-AMP binding site. The 'KMSKS' region signature appears at 290-294 (KMSKS).

It belongs to the class-I aminoacyl-tRNA synthetase family. MshC subfamily. As to quaternary structure, monomer. The cofactor is Zn(2+).

It catalyses the reaction 1D-myo-inositol 2-amino-2-deoxy-alpha-D-glucopyranoside + L-cysteine + ATP = 1D-myo-inositol 2-(L-cysteinylamino)-2-deoxy-alpha-D-glucopyranoside + AMP + diphosphate + H(+). Catalyzes the ATP-dependent condensation of GlcN-Ins and L-cysteine to form L-Cys-GlcN-Ins. The chain is L-cysteine:1D-myo-inositol 2-amino-2-deoxy-alpha-D-glucopyranoside ligase 1 from Corynebacterium urealyticum (strain ATCC 43042 / DSM 7109).